A 494-amino-acid polypeptide reads, in one-letter code: Ketol-acid reductoisomerase (NADP(+)) (494 aa).

In terms of domain architecture, KARI N-terminal Rossmann spans 14 to 208 (LDQLGRCRFM…GGHRAGCLES (195 aa)). NADP(+) is bound by residues 45–48 (CGAQ), Arg68, Arg76, Ser78, and 108–110 (DKQ). His132 is a catalytic residue. Position 158 (Gly158) interacts with NADP(+). 2 consecutive KARI C-terminal knotted domains span residues 209-344 (SFVA…NYPE) and 345-487 (SDVE…MSDM). Mg(2+) is bound by residues Asp217, Glu221, Glu389, and Glu393. Ser414 is a binding site for substrate.

Belongs to the ketol-acid reductoisomerase family. Mg(2+) is required as a cofactor.

The enzyme catalyses (2R)-2,3-dihydroxy-3-methylbutanoate + NADP(+) = (2S)-2-acetolactate + NADPH + H(+). It carries out the reaction (2R,3R)-2,3-dihydroxy-3-methylpentanoate + NADP(+) = (S)-2-ethyl-2-hydroxy-3-oxobutanoate + NADPH + H(+). The protein operates within amino-acid biosynthesis; L-isoleucine biosynthesis; L-isoleucine from 2-oxobutanoate: step 2/4. It participates in amino-acid biosynthesis; L-valine biosynthesis; L-valine from pyruvate: step 2/4. Its function is as follows. Involved in the biosynthesis of branched-chain amino acids (BCAA). Catalyzes an alkyl-migration followed by a ketol-acid reduction of (S)-2-acetolactate (S2AL) to yield (R)-2,3-dihydroxy-isovalerate. In the isomerase reaction, S2AL is rearranged via a Mg-dependent methyl migration to produce 3-hydroxy-3-methyl-2-ketobutyrate (HMKB). In the reductase reaction, this 2-ketoacid undergoes a metal-dependent reduction by NADPH to yield (R)-2,3-dihydroxy-isovalerate. This chain is Ketol-acid reductoisomerase (NADP(+)), found in Aliivibrio fischeri (strain ATCC 700601 / ES114) (Vibrio fischeri).